We begin with the raw amino-acid sequence, 203 residues long: Probable GTP-binding protein EngB (203 aa).

The EngB-type G domain occupies 24 to 199 (DGSEVAFAGR…HTVIETWLGL (176 aa)). GTP is bound by residues 32 to 39 (GRSNAGKS), 59 to 63 (GRTQQ), 77 to 80 (DLPG), 144 to 147 (TKAD), and 178 to 180 (FSS). Residues Ser39 and Thr61 each contribute to the Mg(2+) site.

Belongs to the TRAFAC class TrmE-Era-EngA-EngB-Septin-like GTPase superfamily. EngB GTPase family. The cofactor is Mg(2+).

Functionally, necessary for normal cell division and for the maintenance of normal septation. In Xylella fastidiosa (strain 9a5c), this protein is Probable GTP-binding protein EngB.